A 249-amino-acid chain; its full sequence is Phosphate import ATP-binding protein PstB 2 (249 aa).

Residues 4–244 (IEVRDLDLFY…PKDKRTEDYI (241 aa)) enclose the ABC transporter domain. 36–43 (GPSGCGKS) is a binding site for ATP.

Belongs to the ABC transporter superfamily. Phosphate importer (TC 3.A.1.7) family. In terms of assembly, the complex is composed of two ATP-binding proteins (PstB), two transmembrane proteins (PstC and PstA) and a solute-binding protein (PstS).

It localises to the cell membrane. The catalysed reaction is phosphate(out) + ATP + H2O = ADP + 2 phosphate(in) + H(+). Functionally, part of the ABC transporter complex PstSACB involved in phosphate import. Responsible for energy coupling to the transport system. In Caldanaerobacter subterraneus subsp. tengcongensis (strain DSM 15242 / JCM 11007 / NBRC 100824 / MB4) (Thermoanaerobacter tengcongensis), this protein is Phosphate import ATP-binding protein PstB 2.